Here is a 451-residue protein sequence, read N- to C-terminus: Phosphoglucosamine mutase (451 aa).

Catalysis depends on S101, which acts as the Phosphoserine intermediate. S101, D242, D244, and D246 together coordinate Mg(2+). Position 101 is a phosphoserine (S101).

The protein belongs to the phosphohexose mutase family. The cofactor is Mg(2+). In terms of processing, activated by phosphorylation.

The catalysed reaction is alpha-D-glucosamine 1-phosphate = D-glucosamine 6-phosphate. Its function is as follows. Catalyzes the conversion of glucosamine-6-phosphate to glucosamine-1-phosphate. This is Phosphoglucosamine mutase from Beijerinckia indica subsp. indica (strain ATCC 9039 / DSM 1715 / NCIMB 8712).